The chain runs to 263 residues: Urease accessory protein UreD 1 (263 aa).

Belongs to the UreD family. As to quaternary structure, ureD, UreF and UreG form a complex that acts as a GTP-hydrolysis-dependent molecular chaperone, activating the urease apoprotein by helping to assemble the nickel containing metallocenter of UreC. The UreE protein probably delivers the nickel.

The protein localises to the cytoplasm. Required for maturation of urease via the functional incorporation of the urease nickel metallocenter. This is Urease accessory protein UreD 1 from Synechococcus sp. (strain JA-3-3Ab) (Cyanobacteria bacterium Yellowstone A-Prime).